A 323-amino-acid chain; its full sequence is MSNNNSKQEFVPNIQLKEDLGAFSYKVQLSPVEKGMAHILGNSIRRVLLSSLSGASIIKVNIANVLHEYSTLEDVKEDVVEIVSNLKKVAIKLDTAIDRLDLELSVNKSGVVSAGDFKTTQGVEIINKDQPIATLTNQRAFSLTATVSVGRNVGILSAIPTELERVGDIAVDADFNPIKRVAFEVFDNGDSETLEVFVKTNGTIEPLAAVTKALEYFCEQISVFVSLRVPSNGKTGDVLIDSNIDPILLKPIDDLELTVRSSNCLRAENIKYLGDLVQYSESQLMKIPNLGKKSLNEIKQILIDNNLSLGVQIDNFRELVEGK.

The segment at 1–228 is alpha N-terminal domain (alpha-NTD); sequence MSNNNSKQEF…EQISVFVSLR (228 aa). Positions 244–323 are alpha C-terminal domain (alpha-CTD); sequence IDPILLKPID…DNFRELVEGK (80 aa).

The protein belongs to the RNA polymerase alpha chain family. Homodimer. The RNAP catalytic core consists of 2 alpha, 1 beta, 1 beta' and 1 omega subunit. When a sigma factor is associated with the core the holoenzyme is formed, which can initiate transcription.

The catalysed reaction is RNA(n) + a ribonucleoside 5'-triphosphate = RNA(n+1) + diphosphate. DNA-dependent RNA polymerase catalyzes the transcription of DNA into RNA using the four ribonucleoside triphosphates as substrates. The polypeptide is DNA-directed RNA polymerase subunit alpha 1 (Francisella tularensis subsp. novicida (strain U112)).